The sequence spans 469 residues: Glutamate--tRNA ligase (469 aa).

Residues 9-19 (PSPTGFLHVGG) carry the 'HIGH' region motif. The 'KMSKS' region signature appears at 236–240 (KLSKR). Residue lysine 239 coordinates ATP.

It belongs to the class-I aminoacyl-tRNA synthetase family. Glutamate--tRNA ligase type 1 subfamily. As to quaternary structure, monomer.

The protein localises to the cytoplasm. The enzyme catalyses tRNA(Glu) + L-glutamate + ATP = L-glutamyl-tRNA(Glu) + AMP + diphosphate. In terms of biological role, catalyzes the attachment of glutamate to tRNA(Glu) in a two-step reaction: glutamate is first activated by ATP to form Glu-AMP and then transferred to the acceptor end of tRNA(Glu). The polypeptide is Glutamate--tRNA ligase (Shewanella frigidimarina (strain NCIMB 400)).